Reading from the N-terminus, the 329-residue chain is Phenylalanine--tRNA ligase alpha subunit (329 aa).

Glu246 provides a ligand contact to Mg(2+).

This sequence belongs to the class-II aminoacyl-tRNA synthetase family. Phe-tRNA synthetase alpha subunit type 1 subfamily. As to quaternary structure, tetramer of two alpha and two beta subunits. It depends on Mg(2+) as a cofactor.

The protein localises to the cytoplasm. It catalyses the reaction tRNA(Phe) + L-phenylalanine + ATP = L-phenylalanyl-tRNA(Phe) + AMP + diphosphate + H(+). The polypeptide is Phenylalanine--tRNA ligase alpha subunit (Helicobacter hepaticus (strain ATCC 51449 / 3B1)).